Reading from the N-terminus, the 1080-residue chain is AP-4 complex subunit epsilon (1080 aa).

5 HEAT repeats span residues 161–198, 201–238, 369–405, 406–443, and 445–479; these read DTIPAFLQKVLQLLNHQKPIVRKKSVTVLHRFYRLVGD, LDDDQIIDKLRQSLCDRDPSVMSASICIFLDISEKHST, QLIEQCSKNIAIFLKGKHHNLRYFGIKALASIVKVSP, KLVLPYQVEVIESLESPDETLKRKSFDLLYKMTNQTNV, and PVCSKLIEQLVLSKDQNFKSELISQITNIAEKYSP. Disordered stretches follow at residues 711 to 782, 801 to 920, 933 to 973, and 996 to 1027; these read TPLV…FPQQ, NNNS…NIDP, FSEN…INNN, and TNNSNNNNNNNNNNNNNNNNNNNNNNNNNNNL. Composition is skewed to low complexity over residues 762–782, 801–847, 878–911, 936–952, and 962–972; these read QQQQQQQQQQQQQQLQLFPQQ, NNNS…PNNQ, NKQTPPQNATPQQQQQQQQQQTQNTLSQQQIQKH, NNNRNENSNNTDNNQNN, and KKSNNENNINN.

This sequence belongs to the adaptor complexes large subunit family. May be part of the adaptor protein complex 4 (AP-4), a heterotetramer composed of two large adaptins (epsilon-type subunitand beta-type subunit), a medium adaptin (mu-type subunit) and a small adaptin (sigma-type).

It is found in the golgi apparatus. The protein resides in the trans-Golgi network membrane. Functionally, probable component of an adaptor protein complex. Adaptor protein complexes are vesicle coat components involved both in vesicle formation and cargo selection. They control the vesicular transport of proteins in different trafficking pathways. This chain is AP-4 complex subunit epsilon, found in Dictyostelium discoideum (Social amoeba).